A 377-amino-acid polypeptide reads, in one-letter code: Guanine nucleotide exchange factor for Rab-3A (377 aa).

Residues 23-57 (WKNLGPSKGNRKSPGGLVEASASWEEAGGEEHPAA) form a disordered region. Residues 77 to 128 (SEFLKEELYKAQKELKLKDEECERLCKVRAQLEQELEELTASLFEEAHKMVR) are a coiled coil. Residues 167–198 (PASPNRELHPQLLSPTKAGPRKGHSRQKSTSS) form a disordered region. Phosphoserine occurs at positions 169 and 180.

The protein belongs to the SEC2 family. In terms of assembly, interacts with RAB3A and IHPK1 through the coiled-coil domain. This interaction is competitive. IHPK1 kinase activity is not required for this interaction. As to expression, selectively localized to the brain (at protein level).

Guanine nucleotide exchange factor (GEF) which may activate RAB3A, a GTPase that regulates synaptic vesicle exocytosis. Promotes the exchange of GDP to GTP, converting inactive GDP-bound Rab proteins into their active GTP-bound form. May also activate RAB8A and RAB8B. This is Guanine nucleotide exchange factor for Rab-3A (Rab3il1) from Rattus norvegicus (Rat).